The chain runs to 369 residues: MSPIPERAKLHIAMVVFQTGYAGNHVIMRYALNLGVSKLVFPLYRTIVAFSVLAPSAYFLEKKERPAMKISFLIQFFLLGLVGITLNQGFYIFGLDNTSPTFASATENVVPAVSFLMAALLGIEKVEWKRKDGIAKVVGTIVSVAGSLVITLYKGPTIYQPSLNIVNQTIKPEEAEEENKNWTLGCLCLMGHCLCWSSWIVLQSPLLKKYPARFSFVSYSCFFAVIQFFGISAYFERDLERWKIISGGELYALLYTGLVGSAMVFAIQIYVVERGGPLFVSAYLPLQTLIAAVLATLALGEHFYLGGLIGAILIMSGLYLVVMGKSWENQALCQQQQHMISSAASDFGDEEDYHNNKPRSPISQPLISS.

10 consecutive transmembrane segments (helical) span residues 12 to 31 (IAMV…MRYA), 39 to 59 (LVFP…SAYF), 72 to 92 (FLIQ…GFYI), 103 to 123 (ASAT…LLGI), 133 to 153 (GIAK…ITLY), 182 to 202 (WTLG…WIVL), 214 to 234 (FSFV…ISAY), 252 to 272 (ALLY…IYVV), 278 to 298 (LFVS…ATLA), and 303 to 323 (FYLG…LVVM). EamA domains follow at residues 24-150 (NHVI…SLVI) and 194-323 (LCWS…LVVM). The tract at residues 348 to 369 (GDEEDYHNNKPRSPISQPLISS) is disordered.

The protein belongs to the drug/metabolite transporter (DMT) superfamily. Plant drug/metabolite exporter (P-DME) (TC 2.A.7.4) family.

Its subcellular location is the membrane. The sequence is that of WAT1-related protein At3g53210 from Arabidopsis thaliana (Mouse-ear cress).